Consider the following 82-residue polypeptide: ATP synthase subunit c, chloroplastic (82 aa).

Transmembrane regions (helical) follow at residues 3-23 (PLICAASVVGAGLAIGLGAIG) and 57-77 (LAFMEALTIYGLVVALALMFA).

This sequence belongs to the ATPase C chain family. As to quaternary structure, F-type ATPases have 2 components, F(1) - the catalytic core - and F(0) - the membrane proton channel. F(1) has five subunits: alpha(3), beta(3), gamma(1), delta(1), epsilon(1). F(0) has four main subunits: a(1), b(1), b'(1) and c(10-14). The alpha and beta chains form an alternating ring which encloses part of the gamma chain. F(1) is attached to F(0) by a central stalk formed by the gamma and epsilon chains, while a peripheral stalk is formed by the delta, b and b' chains.

Its subcellular location is the plastid. It is found in the chloroplast thylakoid membrane. Functionally, f(1)F(0) ATP synthase produces ATP from ADP in the presence of a proton or sodium gradient. F-type ATPases consist of two structural domains, F(1) containing the extramembraneous catalytic core and F(0) containing the membrane proton channel, linked together by a central stalk and a peripheral stalk. During catalysis, ATP synthesis in the catalytic domain of F(1) is coupled via a rotary mechanism of the central stalk subunits to proton translocation. Its function is as follows. Key component of the F(0) channel; it plays a direct role in translocation across the membrane. A homomeric c-ring of between 10-14 subunits forms the central stalk rotor element with the F(1) delta and epsilon subunits. In Ostreococcus tauri, this protein is ATP synthase subunit c, chloroplastic.